Reading from the N-terminus, the 288-residue chain is 4-hydroxy-3-methylbut-2-enyl diphosphate reductase (288 aa).

Cys-13 is a [4Fe-4S] cluster binding site. Residues His-41 and His-75 each coordinate (2E)-4-hydroxy-3-methylbut-2-enyl diphosphate. Dimethylallyl diphosphate contacts are provided by His-41 and His-75. Isopentenyl diphosphate is bound by residues His-41 and His-75. Cys-97 lines the [4Fe-4S] cluster pocket. His-130 contributes to the (2E)-4-hydroxy-3-methylbut-2-enyl diphosphate binding site. His-130 lines the dimethylallyl diphosphate pocket. Isopentenyl diphosphate is bound at residue His-130. Glu-132 serves as the catalytic Proton donor. Thr-168 is a binding site for (2E)-4-hydroxy-3-methylbut-2-enyl diphosphate. Cys-199 contributes to the [4Fe-4S] cluster binding site. Residues Ser-227, Ser-228, Asn-229, and Ser-271 each contribute to the (2E)-4-hydroxy-3-methylbut-2-enyl diphosphate site. Dimethylallyl diphosphate contacts are provided by Ser-227, Ser-228, Asn-229, and Ser-271. Ser-227, Ser-228, Asn-229, and Ser-271 together coordinate isopentenyl diphosphate.

It belongs to the IspH family. It depends on [4Fe-4S] cluster as a cofactor.

The catalysed reaction is isopentenyl diphosphate + 2 oxidized [2Fe-2S]-[ferredoxin] + H2O = (2E)-4-hydroxy-3-methylbut-2-enyl diphosphate + 2 reduced [2Fe-2S]-[ferredoxin] + 2 H(+). It carries out the reaction dimethylallyl diphosphate + 2 oxidized [2Fe-2S]-[ferredoxin] + H2O = (2E)-4-hydroxy-3-methylbut-2-enyl diphosphate + 2 reduced [2Fe-2S]-[ferredoxin] + 2 H(+). It functions in the pathway isoprenoid biosynthesis; dimethylallyl diphosphate biosynthesis; dimethylallyl diphosphate from (2E)-4-hydroxy-3-methylbutenyl diphosphate: step 1/1. It participates in isoprenoid biosynthesis; isopentenyl diphosphate biosynthesis via DXP pathway; isopentenyl diphosphate from 1-deoxy-D-xylulose 5-phosphate: step 6/6. Functionally, catalyzes the conversion of 1-hydroxy-2-methyl-2-(E)-butenyl 4-diphosphate (HMBPP) into a mixture of isopentenyl diphosphate (IPP) and dimethylallyl diphosphate (DMAPP). Acts in the terminal step of the DOXP/MEP pathway for isoprenoid precursor biosynthesis. The sequence is that of 4-hydroxy-3-methylbut-2-enyl diphosphate reductase from Phocaeicola vulgatus (strain ATCC 8482 / DSM 1447 / JCM 5826 / CCUG 4940 / NBRC 14291 / NCTC 11154) (Bacteroides vulgatus).